The chain runs to 179 residues: Large ribosomal subunit protein uL6 (179 aa).

It belongs to the universal ribosomal protein uL6 family. Part of the 50S ribosomal subunit.

Functionally, this protein binds to the 23S rRNA, and is important in its secondary structure. It is located near the subunit interface in the base of the L7/L12 stalk, and near the tRNA binding site of the peptidyltransferase center. This is Large ribosomal subunit protein uL6 from Chlorobium chlorochromatii (strain CaD3).